Reading from the N-terminus, the 1475-residue chain is Sterol 3-beta-glucosyltransferase (1475 aa).

Disordered stretches follow at residues 1–73 (MPPP…PPMF) and 94–218 (HDRF…EDDK). Over residues 8–17 (LPLHGPAGAA) the composition is skewed to low complexity. The segment covering 30–40 (RVGKKLQKKRH) has biased composition (basic residues). Basic and acidic residues predominate over residues 108–118 (GPQRDSADRSH). The span at 156 to 168 (EKHKRKISGHKLL) shows a compositional bias: basic residues. The region spanning 270-315 (QDIFEFDQPEAVIEEYPCWLLQSVLLQGYMYITAKHICFYSYLPKK) is the GRAM 1 domain. In terms of domain architecture, PH spans 318–413 (EVVKSGYLSK…WVKSLQRVIF (96 aa)). Disordered regions lie at residues 492-541 (ARLK…TTNK), 594-636 (SSPR…MEEP), and 653-715 (QILR…PVTP). Over residues 505 to 531 (QQQQQQHPMQPPMQASARSSMSGSRRA) the composition is skewed to low complexity. Polar residues-rich tracts occupy residues 621–634 (QQGS…SSME) and 653–674 (QILR…SASR). The segment covering 675–686 (TEVEKQQRRDPR) has biased composition (basic and acidic residues). A GRAM 2 domain is found at 798–901 (RFRAHFALPE…RDDCAVTLLQ (104 aa)). Serine 989, arginine 990, aspartate 992, alanine 1293, histidine 1295, histidine 1308, serine 1311, glycine 1312, threonine 1313, aspartate 1332, and glutamine 1333 together coordinate UDP-alpha-D-glucose. The disordered stretch occupies residues 1413 to 1475 (IQVEPDEDEE…RVSPSQQSVA (63 aa)). Acidic residues predominate over residues 1416–1425 (EPDEDEESAE).

It belongs to the glycosyltransferase 28 family.

The protein resides in the cytoplasm. It is found in the preautophagosomal structure membrane. It catalyses the reaction a sterol + UDP-alpha-D-glucose = a sterol 3-beta-D-glucoside + UDP + H(+). The enzyme catalyses ergosterol + UDP-alpha-D-glucose = ergosteryl 3-beta-D-glucoside + UDP + H(+). Functionally, sterol glycosyltransferase responsible for the glycosylation of ergosterol to form ergosterol-glucoside. Mediates autophagic degradation of peroxisomes (pexophagy) and is involved in pathogenesis via peroxisome degradation inside appressoria that are developing into the host invasion stage. The chain is Sterol 3-beta-glucosyltransferase from Glomerella lagenarium (Anthracnose fungus).